A 172-amino-acid chain; its full sequence is uncharacterized protein (172 aa).

Disordered regions lie at residues 1–39 and 90–112; these read MAKV…NSNN and DLNG…GSIN. A compositionally biased stretch (low complexity) spans 98–110; the sequence is NDSNNDNSPSRGS.

This is an uncharacterized protein from Dictyostelium discoideum (Social amoeba).